The chain runs to 149 residues: Protein TraJ (149 aa).

The protein localises to the cell membrane. Its function is as follows. This protein is essential for positively regulating the expression of transfer genes that are involved in the conjugal transfer of DNA between bacterial cells. This chain is Protein TraJ (traJ), found in Escherichia coli.